The sequence spans 700 residues: Elongation factor G (700 aa).

The region spanning 8-290 (ERYRNIGISA…AVVEYLPAPT (283 aa)) is the tr-type G domain. Residues 17–24 (AHIDAGKT), 88–92 (DTPGH), and 142–145 (NKMD) each bind GTP.

This sequence belongs to the TRAFAC class translation factor GTPase superfamily. Classic translation factor GTPase family. EF-G/EF-2 subfamily.

The protein resides in the cytoplasm. Functionally, catalyzes the GTP-dependent ribosomal translocation step during translation elongation. During this step, the ribosome changes from the pre-translocational (PRE) to the post-translocational (POST) state as the newly formed A-site-bound peptidyl-tRNA and P-site-bound deacylated tRNA move to the P and E sites, respectively. Catalyzes the coordinated movement of the two tRNA molecules, the mRNA and conformational changes in the ribosome. The chain is Elongation factor G from Haemophilus influenzae (strain PittEE).